The sequence spans 233 residues: Purine nucleoside phosphorylase DeoD-type (233 aa).

His4 is an a purine D-ribonucleoside binding site. Phosphate contacts are provided by residues Gly20, Arg24, Arg43, and 87–90 (RIGT). A purine D-ribonucleoside-binding positions include 179-181 (EME) and 203-204 (SD). Residue Asp204 is the Proton donor of the active site.

Belongs to the PNP/UDP phosphorylase family. In terms of assembly, homohexamer; trimer of homodimers.

The catalysed reaction is a purine D-ribonucleoside + phosphate = a purine nucleobase + alpha-D-ribose 1-phosphate. It catalyses the reaction a purine 2'-deoxy-D-ribonucleoside + phosphate = a purine nucleobase + 2-deoxy-alpha-D-ribose 1-phosphate. Catalyzes the reversible phosphorolytic breakdown of the N-glycosidic bond in the beta-(deoxy)ribonucleoside molecules, with the formation of the corresponding free purine bases and pentose-1-phosphate. The chain is Purine nucleoside phosphorylase DeoD-type from Helicobacter acinonychis (strain Sheeba).